The primary structure comprises 230 residues: 7-cyano-7-deazaguanine synthase (230 aa).

16-26 contacts ATP; it reads LSGGLDSATVV. Positions 195, 205, 208, and 211 each coordinate Zn(2+).

The protein belongs to the QueC family. The cofactor is Zn(2+).

The catalysed reaction is 7-carboxy-7-deazaguanine + NH4(+) + ATP = 7-cyano-7-deazaguanine + ADP + phosphate + H2O + H(+). Its pathway is purine metabolism; 7-cyano-7-deazaguanine biosynthesis. Catalyzes the ATP-dependent conversion of 7-carboxy-7-deazaguanine (CDG) to 7-cyano-7-deazaguanine (preQ(0)). In Pseudomonas fluorescens (strain Pf0-1), this protein is 7-cyano-7-deazaguanine synthase.